A 644-amino-acid chain; its full sequence is Protein lin-9 (644 aa).

Residues 1–77 are disordered; sequence MSSAVRSPRK…GRDSPSVNSL (77 aa). Residues 50 to 62 show a composition bias toward basic residues; it reads SIKRTGSPKKSPA.

This sequence belongs to the lin-9 family. As to quaternary structure, component of the DRM complex, at least composed of lin-9, lin-35, lin-37, lin-52, lin-53, lin-54- dpl-1 and efl-1. Interacts with zft-11; the interaction is required to suppress the activation of non-neuronal genes in neurons.

It is found in the nucleus. Synthetic multivulva class B (synMuvB) protein. SynMuvB proteins are required to repress the induction of vulval development by Ras signaling and probably act by forming the multiprotein DRM complex that represses transcription. Required for the development of sheath cells in the hermaphrodite gonad and for the development of the male spicule, rays and gonad. In association with the zinc finger protein ztf-11, negatively regulates the expression of non-neuronal genes during neurogenesis. The chain is Protein lin-9 from Caenorhabditis elegans.